The following is a 360-amino-acid chain: Phospho-N-acetylmuramoyl-pentapeptide-transferase (360 aa).

A run of 10 helical transmembrane segments spans residues 27 to 47 (IVGLLTALIIALWMGPHLIAW), 71 to 91 (TPTMGGIMILFSIAVSTLLWA), 97 to 117 (YVWCVLLVLIGYGIIGFIDDY), 132 to 152 (WKYFWQSVLALAVAFSMYAIG), 168 to 188 (VMPQLGMLYILLAYFVIVGTS), 199 to 219 (GLAIMPTVFVAAGFALVAWAT), 236 to 256 (AGELVIVCTAIVGAGLGFLWF), 263 to 283 (VFMGDVGSLALGGALGTIAVL), 288 to 308 (FLLVIMGGVFVVETLSVILQV), and 338 to 358 (VIVRFWIISLMLVLIGLATLK).

The protein belongs to the glycosyltransferase 4 family. MraY subfamily. Mg(2+) serves as cofactor.

The protein resides in the cell inner membrane. The catalysed reaction is UDP-N-acetyl-alpha-D-muramoyl-L-alanyl-gamma-D-glutamyl-meso-2,6-diaminopimeloyl-D-alanyl-D-alanine + di-trans,octa-cis-undecaprenyl phosphate = di-trans,octa-cis-undecaprenyl diphospho-N-acetyl-alpha-D-muramoyl-L-alanyl-D-glutamyl-meso-2,6-diaminopimeloyl-D-alanyl-D-alanine + UMP. Its pathway is cell wall biogenesis; peptidoglycan biosynthesis. In terms of biological role, catalyzes the initial step of the lipid cycle reactions in the biosynthesis of the cell wall peptidoglycan: transfers peptidoglycan precursor phospho-MurNAc-pentapeptide from UDP-MurNAc-pentapeptide onto the lipid carrier undecaprenyl phosphate, yielding undecaprenyl-pyrophosphoryl-MurNAc-pentapeptide, known as lipid I. The protein is Phospho-N-acetylmuramoyl-pentapeptide-transferase of Proteus mirabilis (strain HI4320).